The chain runs to 552 residues: Arginine--tRNA ligase (552 aa).

Positions 123 to 133 match the 'HIGH' region motif; the sequence is ANPTGPLTIGR.

The protein belongs to the class-I aminoacyl-tRNA synthetase family. Monomer.

The protein localises to the cytoplasm. The catalysed reaction is tRNA(Arg) + L-arginine + ATP = L-arginyl-tRNA(Arg) + AMP + diphosphate. This Chlorobium luteolum (strain DSM 273 / BCRC 81028 / 2530) (Pelodictyon luteolum) protein is Arginine--tRNA ligase.